Reading from the N-terminus, the 372-residue chain is Bifunctional enzyme IspD/IspF (372 aa).

The segment at 1–211 (MLDISLIMLG…SALKAPENEL (211 aa)) is 2-C-methyl-D-erythritol 4-phosphate cytidylyltransferase. Residues 212-372 (FVGSGFDVHE…SLKFYNWTQI (161 aa)) form a 2-C-methyl-D-erythritol 2,4-cyclodiphosphate synthase region. A divalent metal cation is bound by residues Asp218 and His220. Residues 218–220 (DVH) and 244–245 (HS) each bind 4-CDP-2-C-methyl-D-erythritol 2-phosphate. His252 provides a ligand contact to a divalent metal cation. 4-CDP-2-C-methyl-D-erythritol 2-phosphate-binding positions include 266–268 (DIG), 271–275 (FPDTD), 342–345 (TTTE), Phe349, and Arg352.

The protein in the N-terminal section; belongs to the IspD/TarI cytidylyltransferase family. IspD subfamily. This sequence in the C-terminal section; belongs to the IspF family. Requires a divalent metal cation as cofactor.

The catalysed reaction is 2-C-methyl-D-erythritol 4-phosphate + CTP + H(+) = 4-CDP-2-C-methyl-D-erythritol + diphosphate. The enzyme catalyses 4-CDP-2-C-methyl-D-erythritol 2-phosphate = 2-C-methyl-D-erythritol 2,4-cyclic diphosphate + CMP. It functions in the pathway isoprenoid biosynthesis; isopentenyl diphosphate biosynthesis via DXP pathway; isopentenyl diphosphate from 1-deoxy-D-xylulose 5-phosphate: step 2/6. Its pathway is isoprenoid biosynthesis; isopentenyl diphosphate biosynthesis via DXP pathway; isopentenyl diphosphate from 1-deoxy-D-xylulose 5-phosphate: step 4/6. Functionally, bifunctional enzyme that catalyzes the formation of 4-diphosphocytidyl-2-C-methyl-D-erythritol from CTP and 2-C-methyl-D-erythritol 4-phosphate (MEP) (IspD), and catalyzes the conversion of 4-diphosphocytidyl-2-C-methyl-D-erythritol 2-phosphate (CDP-ME2P) to 2-C-methyl-D-erythritol 2,4-cyclodiphosphate (ME-CPP) with a corresponding release of cytidine 5-monophosphate (CMP) (IspF). This chain is Bifunctional enzyme IspD/IspF, found in Campylobacter concisus (strain 13826).